The following is a 501-amino-acid chain: Archaemetzincin-1 (501 aa).

His261 contacts Zn(2+). The active-site Proton acceptor is Glu262. Zn(2+)-binding residues include His265, Cys272, Cys277, Cys296, and Cys299. The interval 349 to 370 (DSGMGCESDTEPVTSPSEPVTP) is disordered.

The protein belongs to the peptidase M54 family. It depends on Zn(2+) as a cofactor.

Its function is as follows. Probable zinc metalloprotease. In Rattus norvegicus (Rat), this protein is Archaemetzincin-1 (Amz1).